The primary structure comprises 112 residues: Large ribosomal subunit protein bL17 (112 aa).

The protein belongs to the bacterial ribosomal protein bL17 family. As to quaternary structure, part of the 50S ribosomal subunit. Contacts protein L32.

This chain is Large ribosomal subunit protein bL17, found in Caldanaerobacter subterraneus subsp. tengcongensis (strain DSM 15242 / JCM 11007 / NBRC 100824 / MB4) (Thermoanaerobacter tengcongensis).